Reading from the N-terminus, the 323-residue chain is rRNA 2'-O-methyltransferase fibrillarin (323 aa).

The tract at residues 1–78 (MRPGFSPRGG…GGGRGGFGGG (78 aa)) is disordered. 2 stretches are compositionally biased toward gly residues: residues 7–44 (PRGG…GGRG) and 63–78 (GRGG…FGGG). Asymmetric dimethylarginine is present on residues R8, R17, R23, and R29. Residues 174-175 (TT), 193-194 (EF), 218-219 (DA), and 238-241 (DVAQ) contribute to the S-adenosyl-L-methionine site. The tract at residues 276 to 308 (APEAVFAAEVKKMQQENMKPQEQLTLEPYERDH) is helical.

The protein belongs to the methyltransferase superfamily. Fibrillarin family. In terms of assembly, component of box C/D small nucleolar ribonucleoprotein (snoRNP) particles. Part of the small subunit (SSU) processome, composed of more than 70 proteins and the RNA chaperone small nucleolar RNA (snoRNA) U3. Post-translationally, by homology to other fibrillarins, some or all of the N-terminal domain arginines are modified to asymmetric dimethylarginine (DMA).

It is found in the nucleus. The protein resides in the nucleolus. The protein localises to the nucleoplasm. It catalyses the reaction L-glutaminyl-[histone H2A] + S-adenosyl-L-methionine = N(5)-methyl-L-glutaminyl-[histone H2A] + S-adenosyl-L-homocysteine + H(+). The catalysed reaction is a ribonucleotide in rRNA + S-adenosyl-L-methionine = a 2'-O-methylribonucleotide in rRNA + S-adenosyl-L-homocysteine + H(+). The enzyme catalyses a ribonucleotide in U6 snRNA + S-adenosyl-L-methionine = a 2'-O-methylribonucleotide in U6 snRNA + S-adenosyl-L-homocysteine + H(+). S-adenosyl-L-methionine-dependent methyltransferase that has the ability to methylate both RNAs and proteins. Involved in pre-rRNA processing by catalyzing the site-specific 2'-hydroxyl methylation of ribose moieties in pre-ribosomal RNA. Probably catalyzes 2'-O-methylation of U6 snRNAs in box C/D RNP complexes. U6 snRNA 2'-O-methylation is required for mRNA splicing fidelity. Also acts as a protein methyltransferase by mediating methylation of 'Gln-105' of histone H2A (H2AQ104me), a modification that impairs binding of the FACT complex and is specifically present at 35S ribosomal DNA locus. Part of the small subunit (SSU) processome, first precursor of the small eukaryotic ribosomal subunit. During the assembly of the SSU processome in the nucleolus, many ribosome biogenesis factors, an RNA chaperone and ribosomal proteins associate with the nascent pre-rRNA and work in concert to generate RNA folding, modifications, rearrangements and cleavage as well as targeted degradation of pre-ribosomal RNA by the RNA exosome. The protein is rRNA 2'-O-methyltransferase fibrillarin (fbl) of Xenopus laevis (African clawed frog).